We begin with the raw amino-acid sequence, 374 residues long: Peptide chain release factor 2 (374 aa).

N5-methylglutamine is present on Gln249.

The protein belongs to the prokaryotic/mitochondrial release factor family. In terms of processing, methylated by PrmC. Methylation increases the termination efficiency of RF2.

It localises to the cytoplasm. Functionally, peptide chain release factor 2 directs the termination of translation in response to the peptide chain termination codons UGA and UAA. This chain is Peptide chain release factor 2, found in Ruegeria sp. (strain TM1040) (Silicibacter sp.).